Here is a 70-residue protein sequence, read N- to C-terminus: UPF0434 protein MCA0634 (70 aa).

It belongs to the UPF0434 family.

The polypeptide is UPF0434 protein MCA0634 (Methylococcus capsulatus (strain ATCC 33009 / NCIMB 11132 / Bath)).